The following is a 432-amino-acid chain: MTNVVVVGSQWGDEGKGKIVDWLSERADVVVRYQGGHNAGHTLVIDGISYKLSLLPSGVVRPGKLAVIGNGVVVDPHALIAEIGRLEVQGVKVTPENLRIADNATLILSLHRELDGMREDAASNSGTKIGTTRRGIGPAYEDKVGRRAIRVMDLADMEALSAKVDRILTHHNALRRGFGATEVSHETIMEELGSIAERILPFSETVWLLLDKKRRAGARILFEGAQGSLLDIDHGTYPYVTSSNTVAGQAAAGSGMGPGSLGYILGITKAYTTRVGEGPFPTELHDEIGQFLGEKGHEFGTVTGRKRRCGWFDAALVRQSVATNGITGIALTKLDVLDGLDELKICVGYKLDGQEIDHLPASQGAQARVEPIYVTLEGWKESTVGARKWADLPAQAIKYVRQVEELIGAPVALLSTSPERDDTILVTDPFED.

Residues 12–18 (GDEGKGK) and 40–42 (GHT) contribute to the GTP site. The active-site Proton acceptor is the Asp-13. 2 residues coordinate Mg(2+): Asp-13 and Gly-40. Residues 13 to 16 (DEGK), 38 to 41 (NAGH), Thr-132, Arg-146, Gln-226, Thr-241, and Arg-305 each bind IMP. The Proton donor role is filled by His-41. 301–307 (TVTGRKR) contacts substrate. GTP is bound by residues Arg-307, 333 to 335 (KLD), and 415 to 417 (STS).

The protein belongs to the adenylosuccinate synthetase family. As to quaternary structure, homodimer. The cofactor is Mg(2+).

The protein resides in the cytoplasm. It catalyses the reaction IMP + L-aspartate + GTP = N(6)-(1,2-dicarboxyethyl)-AMP + GDP + phosphate + 2 H(+). The protein operates within purine metabolism; AMP biosynthesis via de novo pathway; AMP from IMP: step 1/2. In terms of biological role, plays an important role in the de novo pathway of purine nucleotide biosynthesis. Catalyzes the first committed step in the biosynthesis of AMP from IMP. This chain is Adenylosuccinate synthetase, found in Agrobacterium fabrum (strain C58 / ATCC 33970) (Agrobacterium tumefaciens (strain C58)).